The primary structure comprises 439 residues: 23S rRNA (uracil(1939)-C(5))-methyltransferase RlmD (439 aa).

The 60-residue stretch at 10–69 (KTQLNTRHQAVQVERLDHHGAGIAYLKKKPLFIDGALPGEEVVTQLVEEKSKFARGKLIK) folds into the TRAM domain. Residues Cys82, Cys88, Cys91, and Cys169 each contribute to the [4Fe-4S] cluster site. Positions 272, 301, 306, 322, 349, and 370 each coordinate S-adenosyl-L-methionine. Catalysis depends on Cys396, which acts as the Nucleophile.

It belongs to the class I-like SAM-binding methyltransferase superfamily. RNA M5U methyltransferase family. RlmD subfamily.

The enzyme catalyses uridine(1939) in 23S rRNA + S-adenosyl-L-methionine = 5-methyluridine(1939) in 23S rRNA + S-adenosyl-L-homocysteine + H(+). In terms of biological role, catalyzes the formation of 5-methyl-uridine at position 1939 (m5U1939) in 23S rRNA. The sequence is that of 23S rRNA (uracil(1939)-C(5))-methyltransferase RlmD from Vibrio campbellii (strain ATCC BAA-1116).